A 712-amino-acid chain; its full sequence is Cadherin-13 (712 aa).

The first 22 residues, 1–22 (MQHKTQLTLSFLLSQVLLLACA), serve as a signal peptide directing secretion. A propeptide spanning residues 23–138 (EDLECTPGFQ…GNLGIPRQKR (116 aa)) is cleaved from the precursor. A glycan (N-linked (GlcNAc...) asparagine) is linked at asparagine 86. 5 Cadherin domains span residues 143–245 (TPIL…RPMF), 246–363 (KEGP…PPEF), 364–477 (TKKE…GPVF), 478–585 (HPNP…VPSL), and 586–680 (YPTL…LQVC). 5 N-linked (GlcNAc...) asparagine glycosylation sites follow: asparagine 382, asparagine 500, asparagine 530, asparagine 638, and asparagine 671. The GPI-anchor amidated aspartate moiety is linked to residue aspartate 693. Residues 694–712 (ALHISMTLILLSLFSLFCL) constitute a propeptide, removed in mature form.

As to quaternary structure, by contrast to classical cadherins, homodimerization in trans is not mediated by cadherin EC1 domain strand-swapping, but instead through a homophilic adhesive interface which joins two elongated EC1-EC2 domains through a region near their Ca2+-binding sites to form a tetrahedral, X-like shape. As to expression, neural tissues. Also found in muscles; kidney and retina.

It localises to the cell membrane. The protein resides in the cytoplasm. Functionally, cadherins are calcium-dependent cell adhesion proteins. They preferentially interact with themselves in a homophilic manner in connecting cells; cadherins may thus contribute to the sorting of heterogeneous cell types. May act as a negative regulator of neural cell growth. This chain is Cadherin-13 (CDH13), found in Gallus gallus (Chicken).